We begin with the raw amino-acid sequence, 439 residues long: Niacin transporter NiaP (439 aa).

12 consecutive transmembrane segments (helical) span residues 20–40 (LWVV…IAFI), 57–77 (WIVS…GGLA), 84–104 (TVFA…AFAP), 108–128 (WLLA…PVAV), 143–163 (FIVL…LVSY), 169–189 (FGWH…YVII), 253–273 (LMLW…FTWL), 288–308 (FEYV…AAWL), 316–336 (ATLA…GQAD), 338–358 (VFNI…AWGV), 374–394 (FGAG…PIVV), and 407–427 (VFMM…ILGE).

It belongs to the major facilitator superfamily. Sugar transporter (TC 2.A.1.1) family.

It is found in the cell inner membrane. Its function is as follows. Functions as a high-affinity transporter of niacin (nicotinamide or nicotinate). Probably substantially contributes to niacin transport when its concentration in the medium is very low. The sequence is that of Niacin transporter NiaP from Acinetobacter baylyi (strain ATCC 33305 / BD413 / ADP1).